Consider the following 951-residue polypeptide: Pheromone-regulated membrane protein 10 (951 aa).

3 stretches are compositionally biased toward polar residues: residues 1 to 10, 68 to 84, and 92 to 104; these read MSSSYGNNGD, GGST…NVGS, and RTAS…NRRQ. 3 disordered regions span residues 1-293, 313-366, and 433-487; these read MSSS…EDPI, AGKS…TMVS, and NDSS…LPNF. Residues 126 to 135 are compositionally biased toward acidic residues; that stretch reads DDDDEEEEEH. Basic and acidic residues predominate over residues 219–234; sequence PHQETNDGRNSAESHS. 3 stretches are compositionally biased toward polar residues: residues 318–332, 354–366, and 468–484; these read PGTQ…SSEH, PFNQ…TMVS, and SQTN…SMNL. The next 10 helical transmembrane spans lie at 635-655, 657-677, 687-707, 711-731, 753-773, 786-806, 811-831, 841-861, 863-883, and 918-938; these read WVSV…AFGG, WINM…QFIV, VFEV…GSIP, ICFG…YIIL, IIYS…FGWI, NISP…LGLI, WTQL…TYFS, FTSA…SRIW, GFAV…GVAS, and VTMI…TLFI.

This sequence belongs to the ThrE exporter (TC 2.A.79) family.

The protein resides in the membrane. The polypeptide is Pheromone-regulated membrane protein 10 (Kluyveromyces lactis (strain ATCC 8585 / CBS 2359 / DSM 70799 / NBRC 1267 / NRRL Y-1140 / WM37) (Yeast)).